A 556-amino-acid polypeptide reads, in one-letter code: Formate--tetrahydrofolate ligase (556 aa).

Residue T65–S72 participates in ATP binding.

Belongs to the formate--tetrahydrofolate ligase family.

It carries out the reaction (6S)-5,6,7,8-tetrahydrofolate + formate + ATP = (6R)-10-formyltetrahydrofolate + ADP + phosphate. Its pathway is one-carbon metabolism; tetrahydrofolate interconversion. This Elusimicrobium minutum (strain Pei191) protein is Formate--tetrahydrofolate ligase.